We begin with the raw amino-acid sequence, 180 residues long: Large ribosomal subunit protein uL6 (180 aa).

Belongs to the universal ribosomal protein uL6 family. In terms of assembly, part of the 50S ribosomal subunit.

Functionally, this protein binds to the 23S rRNA, and is important in its secondary structure. It is located near the subunit interface in the base of the L7/L12 stalk, and near the tRNA binding site of the peptidyltransferase center. This Salinispora tropica (strain ATCC BAA-916 / DSM 44818 / JCM 13857 / NBRC 105044 / CNB-440) protein is Large ribosomal subunit protein uL6.